Here is a 413-residue protein sequence, read N- to C-terminus: Chloramphenicol efflux pump Rv0191 (413 aa).

Helical transmembrane passes span 23–43 (LSVL…PVGA), 55–75 (VVLV…TTVP), 89–109 (LVVS…APNF), 110–130 (AVLA…WAVI), 150–170 (IYIG…AMSL), 176–196 (LAAV…RLAL), 226–246 (VLTM…VVII), 256–276 (NLAW…PLVA), 286–306 (AVIV…ALAF), 312–332 (AATA…ATAV), 353–373 (GLYV…GGLL), and 378–398 (LAMM…GMTV).

This sequence belongs to the major facilitator superfamily.

The protein localises to the cell membrane. Inhibited by the drug efflux pump inhibitors verapamil, resperine, piperine, chlorpromazine and carbonyl cyanide m-chlorophenylhydrazone (CCCP). Functionally, active efflux pump that plays an important role in chloramphenicol resistance. Overexpression causes pyrazinamide resistance. In Mycobacterium tuberculosis (strain ATCC 25618 / H37Rv), this protein is Chloramphenicol efflux pump Rv0191.